The chain runs to 346 residues: Dihydroorotase (346 aa).

Residues H17 and H19 each coordinate Zn(2+). Substrate is bound by residues 19–21 and N45; that span reads HVR. Zn(2+) contacts are provided by K102, H139, and H177. N6-carboxylysine is present on K102. A substrate-binding site is contributed by H139. A substrate-binding site is contributed by L222. Residue D250 coordinates Zn(2+). D250 is a catalytic residue. Residues H254 and A266 each contribute to the substrate site.

Belongs to the metallo-dependent hydrolases superfamily. DHOase family. Class II DHOase subfamily. Homodimer. Zn(2+) serves as cofactor.

The enzyme catalyses (S)-dihydroorotate + H2O = N-carbamoyl-L-aspartate + H(+). Its pathway is pyrimidine metabolism; UMP biosynthesis via de novo pathway; (S)-dihydroorotate from bicarbonate: step 3/3. Catalyzes the reversible cyclization of carbamoyl aspartate to dihydroorotate. The sequence is that of Dihydroorotase from Delftia acidovorans (strain DSM 14801 / SPH-1).